The sequence spans 902 residues: Magnesium-transporting ATPase, P-type 1 (902 aa).

Over 1–98 (MLKIITRQLF…KPSPWWVHLW (98 aa)) the chain is Cytoplasmic. The helical transmembrane segment at 99-119 (VCYRNPFNILLTILGGISYAT) threads the bilayer. Residue Glu-120 is a topological domain, extracellular. The helical transmembrane segment at 121-141 (DLFAAGVIALMVGISTLLNFV) threads the bilayer. Over 142–291 (QEARSTKAAD…QNAFQKGISR (150 aa)) the chain is Cytoplasmic. Residues 292 to 312 (VSMLLIRFMLVMAPVVLIING) traverse the membrane as a helical segment. Topologically, residues 313–321 (YTKGDWWEA) are extracellular. A helical transmembrane segment spans residues 322–339 (ALFALSVAVGLTPEMLPM). Glu-335 contacts Mg(2+). The Cytoplasmic segment spans residues 340–699 (IVTSTLARGA…IEGRRTFSNM (360 aa)). The 4-aspartylphosphate intermediate role is filled by Asp-377. Mg(2+) is bound by residues Asp-645, Asp-649, and Asn-713. A helical membrane pass occupies residues 700-719 (LKYIKMTASSNFGNVFSVLV). The Extracellular segment spans residues 720 to 728 (ASAFLPFLP). A helical transmembrane segment spans residues 729-748 (MLPLHLLIQNLLYDVSQVAI). Positions 738 and 742 each coordinate Mg(2+). Residues 749 to 770 (PFDNVDEEQIQKPQRWNPADLG) are Cytoplasmic-facing. The helical transmembrane segment at 771-794 (RFMVFFGPISSIFDILTFCLMWWV) threads the bilayer. Residues 795-803 (FHANTPETQ) lie on the Extracellular side of the membrane. The chain crosses the membrane as a helical span at residues 804 to 822 (TLFQSGWFVVGLLSQTLIV). The Cytoplasmic portion of the chain corresponds to 823–835 (HMIRTRRLPFIQS). A helical transmembrane segment spans residues 836–855 (RAAWPLMAMTLLVMVVGVSL). Residues 856–870 (PFSPLASYLQLQALP) lie on the Extracellular side of the membrane. A helical transmembrane segment spans residues 871-890 (LSYFPWLIAILVGYMTLTQL). At 891 to 902 (VKGFYSRRYGWQ) the chain is on the cytoplasmic side.

The protein belongs to the cation transport ATPase (P-type) (TC 3.A.3) family. Type IIIB subfamily.

The protein localises to the cell inner membrane. It carries out the reaction Mg(2+)(out) + ATP + H2O = Mg(2+)(in) + ADP + phosphate + H(+). Mediates magnesium influx to the cytosol. This Salmonella typhimurium (strain 14028s / SGSC 2262) protein is Magnesium-transporting ATPase, P-type 1 (mgtA).